The sequence spans 450 residues: tRNA (guanine-N(7)-)-methyltransferase non-catalytic subunit TRM82 (450 aa).

The span at 69-82 shows a compositional bias: basic and acidic residues; it reads AAKKLKTNEGEAIE. The segment at 69-103 is disordered; it reads AAKKLKTNEGEAIERPGNQRRVPLPGKDPKVPVPG. WD repeat units lie at residues 108-147, 200-241, and 245-285; these read PVYQ…KDNC, GHVS…VIDK, and GHKE…LMSS.

This sequence belongs to the WD repeat TRM82 family. As to quaternary structure, forms a heterodimer with the catalytic subunit TRM8.

It localises to the nucleus. The protein operates within tRNA modification; N(7)-methylguanine-tRNA biosynthesis. Functionally, required for the formation of N(7)-methylguanine at position 46 (m7G46) in tRNA. In the complex, it is required to stabilize and induce conformational changes of the catalytic subunit. The polypeptide is tRNA (guanine-N(7)-)-methyltransferase non-catalytic subunit TRM82 (Eremothecium gossypii (strain ATCC 10895 / CBS 109.51 / FGSC 9923 / NRRL Y-1056) (Yeast)).